A 100-amino-acid polypeptide reads, in one-letter code: Large ribosomal subunit protein uL23 (100 aa).

Belongs to the universal ribosomal protein uL23 family. Part of the 50S ribosomal subunit. Contacts protein L29, and trigger factor when it is bound to the ribosome.

One of the early assembly proteins it binds 23S rRNA. One of the proteins that surrounds the polypeptide exit tunnel on the outside of the ribosome. Forms the main docking site for trigger factor binding to the ribosome. The sequence is that of Large ribosomal subunit protein uL23 from Sodalis glossinidius (strain morsitans).